The following is a 75-amino-acid chain: Putative antitoxin PH1062.1 (75 aa).

This sequence belongs to the UPF0330 family.

In terms of biological role, possibly the antitoxin component of a type II toxin-antitoxin (TA) system. The chain is Putative antitoxin PH1062.1 from Pyrococcus horikoshii (strain ATCC 700860 / DSM 12428 / JCM 9974 / NBRC 100139 / OT-3).